A 310-amino-acid chain; its full sequence is MSKIFVFGHQNPDSDAIGSSYGYAYLKRQLGVEAEAVALGTPNEETAFVLDYFSVNAPRVVESAQSEGVNQVILTDHNEFQQSISDIKDVEVIEVVDHHRVANFETANPLMMRLEPVGSASSIVYRMFKENNVEIPKDVAGLLLSGLISDTLLLKSPTTHASDPAVAEELARLAGVNLEEYGLAMLKAGTNLSSKSAEELIDIDAKTFELNGNQVRVAQVNTVDISDVLSRQAEIEEAINSSIKSNGYSDFVLMITDILNSNSEILALGSNTDKIEKAFNFVLENNHAFLKGAVSRKKQVVPQLTESFNV.

His9, Asp13, Asp15, Asp76, His98, and Asp150 together coordinate Mn(2+).

The protein belongs to the PPase class C family. It depends on Mn(2+) as a cofactor.

The protein localises to the cytoplasm. It carries out the reaction diphosphate + H2O = 2 phosphate + H(+). In Streptococcus thermophilus (strain CNRZ 1066), this protein is Probable manganese-dependent inorganic pyrophosphatase.